The following is a 249-amino-acid chain: Chitooligosaccharide deacetylase (249 aa).

Histidine 61 and histidine 125 together coordinate Mg(2+).

The protein belongs to the YdjC deacetylase family. ChbG subfamily. As to quaternary structure, homodimer. Requires Mg(2+) as cofactor.

It localises to the cytoplasm. It carries out the reaction N,N'-diacetylchitobiose + H2O = N-acetyl-beta-D-glucosaminyl-(1-&gt;4)-D-glucosamine + acetate. The catalysed reaction is diacetylchitobiose-6'-phosphate + H2O = N'-monoacetylchitobiose-6'-phosphate + acetate. It functions in the pathway glycan degradation; chitin degradation. In terms of biological role, involved in the degradation of chitin. ChbG is essential for growth on the acetylated chitooligosaccharides chitobiose and chitotriose but is dispensable for growth on cellobiose and chitosan dimer, the deacetylated form of chitobiose. Deacetylation of chitobiose-6-P and chitotriose-6-P is necessary for both the activation of the chb promoter by the regulatory protein ChbR and the hydrolysis of phosphorylated beta-glucosides by the phospho-beta-glucosidase ChbF. Catalyzes the removal of only one acetyl group from chitobiose-6-P to yield monoacetylchitobiose-6-P, the inducer of ChbR and the substrate of ChbF. This Escherichia coli (strain K12 / MC4100 / BW2952) protein is Chitooligosaccharide deacetylase.